The sequence spans 782 residues: Zinc finger and SCAN domain-containing protein 10 (782 aa).

The disordered stretch occupies residues 1–37 (MLAEPVPDALEQEHPGAVKLEEDEVGEEDPRLAESRP). The region spanning 1-71 (MLAEPVPDAL…GRLRELCNHW (71 aa)) is the SCAN box domain. Composition is skewed to basic and acidic residues over residues 11 to 20 (EQEHPGAVKL) and 28 to 37 (EDPRLAESRP). Residues serine 160 and serine 206 each carry the phosphoserine modification. Disordered stretches follow at residues 197-233 (LAPS…ENSR) and 290-321 (SQTE…TPAD). 14 C2H2-type zinc fingers span residues 292–315 (TEKP…STGW), 321–343 (DGSE…EMQF), 349–371 (GVNF…NLQP), 377–399 (SFRC…HMRT), 421–443 (LTKH…NQGF), 467–489 (EGKT…TFKR), 495–517 (RHLR…SLSS), 523–545 (PYVC…HTRR), 551–573 (RPFS…SHQQ), 579–601 (KPHA…RHLL), 607–629 (RPYH…RHVR), 635–657 (KPCR…RHQR), 669–691 (ICGH…TGER), and 697–719 (TCGR…TGSK). The span at 302–313 (LTQTVGQETSST) shows a compositional bias: polar residues. An N5-methylglutamine modification is found at glutamine 485. The disordered stretch occupies residues 491–522 (SSLKRHLRNHAKDKDHLSSEDPGSLSSSQESN). The segment covering 500–509 (HAKDKDHLSS) has biased composition (basic and acidic residues). Over residues 510 to 521 (EDPGSLSSSQES) the composition is skewed to low complexity.

As to quaternary structure, interacts with POU5F1/OCT4 and SOX2. Methylated at Gln-485 by N6AMT1. In terms of tissue distribution, embryonic stem (ES) cell-specific. Not expressed in adult, except in testis.

It localises to the nucleus. Embryonic stem (ES) cell-specific transcription factor required to maintain ES cell pluripotency. Can both activate and /or repress expression of target genes, depending on the context. Specifically binds the 5'-[GA]CGCNNGCG[CT]-3' DNA consensus sequence. Regulates expression of POU5F1/OCT4, ZSCAN4 and ALYREF/THOC4. The sequence is that of Zinc finger and SCAN domain-containing protein 10 (Zscan10) from Mus musculus (Mouse).